A 223-amino-acid polypeptide reads, in one-letter code: MKFAVLVFPGSNCDRDMYNAAIKSGAQADYVDYRETSLDGYDGVLIPGGFSFGDYLRSGAMASVAPIINEVKRLANDGKPVLGVCNGFQILTEIGLLPGALLHNDSHLFISRNENLKIANNQTPFTNLYGENEIVVYPVAHGEGHYYCTDDIYNELVENNQIILTYEDNPNGSHENIAGIVNKAGNVCGMMPHPERALEKILGTDSGVKLFEAMVNSWREQNV.

The 221-residue stretch at 3 to 223 (FAVLVFPGSN…MVNSWREQNV (221 aa)) folds into the Glutamine amidotransferase type-1 domain. Residue Cys85 is the Nucleophile of the active site. Residues His193 and Glu195 contribute to the active site.

Part of the FGAM synthase complex composed of 1 PurL, 1 PurQ and 2 PurS subunits.

The protein localises to the cytoplasm. It catalyses the reaction N(2)-formyl-N(1)-(5-phospho-beta-D-ribosyl)glycinamide + L-glutamine + ATP + H2O = 2-formamido-N(1)-(5-O-phospho-beta-D-ribosyl)acetamidine + L-glutamate + ADP + phosphate + H(+). It carries out the reaction L-glutamine + H2O = L-glutamate + NH4(+). It functions in the pathway purine metabolism; IMP biosynthesis via de novo pathway; 5-amino-1-(5-phospho-D-ribosyl)imidazole from N(2)-formyl-N(1)-(5-phospho-D-ribosyl)glycinamide: step 1/2. Part of the phosphoribosylformylglycinamidine synthase complex involved in the purines biosynthetic pathway. Catalyzes the ATP-dependent conversion of formylglycinamide ribonucleotide (FGAR) and glutamine to yield formylglycinamidine ribonucleotide (FGAM) and glutamate. The FGAM synthase complex is composed of three subunits. PurQ produces an ammonia molecule by converting glutamine to glutamate. PurL transfers the ammonia molecule to FGAR to form FGAM in an ATP-dependent manner. PurS interacts with PurQ and PurL and is thought to assist in the transfer of the ammonia molecule from PurQ to PurL. This Staphylococcus haemolyticus (strain JCSC1435) protein is Phosphoribosylformylglycinamidine synthase subunit PurQ.